The primary structure comprises 387 residues: SLC2A4 regulator (387 aa).

Disordered regions lie at residues 1 to 97 (MERP…RATP) and 139 to 179 (EALV…PPEA). The segment covering 27–36 (GPGPRAAPVT) has biased composition (low complexity). The C2H2-type zinc finger occupies 200-225 (FQCLWKSCGKVLSTASAMQRHIRLVH). A Nuclear export signal motif is present at residues 253–263 (LTDGLSSLTPV). A phosphoserine mark is found at S264 and S268. Residues 283–305 (EPPALPSPLRPPAPPLPPPPVLS) are disordered. Over residues 285 to 303 (PALPSPLRPPAPPLPPPPV) the composition is skewed to pro residues. The Nuclear localization signal signature appears at 351 to 354 (RKPR).

In terms of assembly, interacts with MEF2A. In terms of tissue distribution, according to PubMed:14630949, expressed in heart, skeletal muscle, liver, kidney and pancreas; undetectable in lung, placenta or brain. According to PubMed:14625278, ubiquitously expressed, with lowest expression in brain and ileum.

Its subcellular location is the cytoplasm. It localises to the nucleus. Transcription factor involved in SLC2A4 and HD gene transactivation. Binds to the consensus sequence 5'-GCCGGCG-3'. This chain is SLC2A4 regulator (SLC2A4RG), found in Homo sapiens (Human).